The chain runs to 398 residues: Acetate kinase (398 aa).

N8 lines the Mg(2+) pocket. Position 15 (K15) interacts with ATP. R89 serves as a coordination point for substrate. D146 acts as the Proton donor/acceptor in catalysis. ATP-binding positions include 206–210 (HIGNG), 283–285 (DMR), and 331–335 (GMGEN). Position 383 (E383) interacts with Mg(2+).

Belongs to the acetokinase family. In terms of assembly, homodimer. Mg(2+) serves as cofactor. Requires Mn(2+) as cofactor.

It localises to the cytoplasm. It catalyses the reaction acetate + ATP = acetyl phosphate + ADP. It participates in metabolic intermediate biosynthesis; acetyl-CoA biosynthesis; acetyl-CoA from acetate: step 1/2. In terms of biological role, catalyzes the formation of acetyl phosphate from acetate and ATP. Can also catalyze the reverse reaction. This Streptococcus pyogenes serotype M1 protein is Acetate kinase.